Reading from the N-terminus, the 298-residue chain is 4-nitrophenylphosphatase (298 aa).

As to quaternary structure, homodimer. In terms of processing, the N-terminus is blocked.

The enzyme catalyses 4-nitrophenyl phosphate + H2O = 4-nitrophenol + phosphate + H(+). Its activity is regulated as follows. Activity enhanced by Mg(2+) ion but inhibited by Zn(2+) ion. In Schizosaccharomyces pombe (strain 972 / ATCC 24843) (Fission yeast), this protein is 4-nitrophenylphosphatase (pho2).